A 485-amino-acid polypeptide reads, in one-letter code: NADH-quinone oxidoreductase subunit N (485 aa).

A run of 14 helical transmembrane segments spans residues 8–28 (LIAL…MLSI), 35–55 (FLNA…LWFV), 71–91 (GFAM…CTFA), 105–125 (FYLL…ANHL), 127–147 (SLFL…GYAF), 159–179 (YTIL…LVYA), 203–223 (LLAG…LVPF), 235–255 (PAPV…GVVM), 271–291 (VVLA…ALSQ), 297–317 (LLGY…IALQ), 326–346 (VGVY…VVSL), 373–393 (AAVM…LGFI), 408–430 (WWLV…RVAV), and 455–475 (IVVL…QPLI).

The protein belongs to the complex I subunit 2 family. In terms of assembly, NDH-1 is composed of 13 different subunits. Subunits NuoA, H, J, K, L, M, N constitute the membrane sector of the complex.

Its subcellular location is the cell inner membrane. It carries out the reaction a quinone + NADH + 5 H(+)(in) = a quinol + NAD(+) + 4 H(+)(out). Functionally, NDH-1 shuttles electrons from NADH, via FMN and iron-sulfur (Fe-S) centers, to quinones in the respiratory chain. The immediate electron acceptor for the enzyme in this species is believed to be ubiquinone. Couples the redox reaction to proton translocation (for every two electrons transferred, four hydrogen ions are translocated across the cytoplasmic membrane), and thus conserves the redox energy in a proton gradient. The protein is NADH-quinone oxidoreductase subunit N of Escherichia coli O7:K1 (strain IAI39 / ExPEC).